The primary structure comprises 292 residues: Small ribosomal subunit biogenesis GTPase RsgA (292 aa).

Residues Arg64–Leu221 enclose the CP-type G domain. Residues Asn113–Asp116 and Gly164–Thr172 each bind GTP. Positions 245, 250, 252, and 258 each coordinate Zn(2+).

This sequence belongs to the TRAFAC class YlqF/YawG GTPase family. RsgA subfamily. As to quaternary structure, monomer. Associates with 30S ribosomal subunit, binds 16S rRNA. Requires Zn(2+) as cofactor.

The protein resides in the cytoplasm. Its function is as follows. One of several proteins that assist in the late maturation steps of the functional core of the 30S ribosomal subunit. Helps release RbfA from mature subunits. May play a role in the assembly of ribosomal proteins into the subunit. Circularly permuted GTPase that catalyzes slow GTP hydrolysis, GTPase activity is stimulated by the 30S ribosomal subunit. This is Small ribosomal subunit biogenesis GTPase RsgA from Clostridium botulinum (strain Loch Maree / Type A3).